Consider the following 641-residue polypeptide: 1-phosphatidylinositol 4,5-bisphosphate phosphodiesterase zeta-1 (641 aa).

The EF-hand domain occupies Cys35–Arg70. Positions Gln155–Lys299 constitute a PI-PLC X-box domain. Catalysis depends on residues His170 and His215. A PI-PLC Y-box domain is found at Leu382–Arg498. Positions Arg498 to Ser622 constitute a C2 domain.

As to quaternary structure, interacts via its C2 domain with PtdIns(3)P and, to a lesser extent, PtdIns(5)P in vitro. Ca(2+) is required as a cofactor.

The protein resides in the nucleus. It is found in the cytoplasm. It localises to the perinuclear region. It catalyses the reaction a 1,2-diacyl-sn-glycero-3-phospho-(1D-myo-inositol-4,5-bisphosphate) + H2O = 1D-myo-inositol 1,4,5-trisphosphate + a 1,2-diacyl-sn-glycerol + H(+). Functionally, the production of the second messenger molecules diacylglycerol (DAG) and inositol 1,4,5-trisphosphate (IP3) is mediated by activated phosphatidylinositol-specific phospholipase C enzymes. In vitro, hydrolyzes PtdIns(4,5)P2 in a Ca(2+)-dependent manner. Triggers intracellular Ca(2+) oscillations in oocytes solely during M phase and is involved in inducing oocyte activation and initiating embryonic development up to the blastocyst stage. Is therefore a strong candidate for the egg-activating soluble sperm factor that is transferred from the sperm into the egg cytoplasm following gamete membrane fusion. May exert an inhibitory effect on phospholipase-C-coupled processes that depend on calcium ions and protein kinase C, including CFTR trafficking and function. This Macaca fascicularis (Crab-eating macaque) protein is 1-phosphatidylinositol 4,5-bisphosphate phosphodiesterase zeta-1.